The following is a 414-amino-acid chain: 2,3-diketo-5-methylthiopentyl-1-phosphate enolase (414 aa).

The Proton acceptor role is filled by Lys-99. Substrate contacts are provided by residues Lys-148, 174 to 177 (KDDE), His-265, Gly-338, and 360 to 361 (GG). Lys-174, Asp-176, and Glu-177 together coordinate Mg(2+). At Lys-174 the chain carries N6-carboxylysine.

This sequence belongs to the RuBisCO large chain family. Type IV subfamily. As to quaternary structure, homodimer. Mg(2+) serves as cofactor.

The catalysed reaction is 5-methylsulfanyl-2,3-dioxopentyl phosphate = 2-hydroxy-5-methylsulfanyl-3-oxopent-1-enyl phosphate. It participates in amino-acid biosynthesis; L-methionine biosynthesis via salvage pathway; L-methionine from S-methyl-5-thio-alpha-D-ribose 1-phosphate: step 3/6. Functionally, catalyzes the enolization of 2,3-diketo-5-methylthiopentyl-1-phosphate (DK-MTP-1-P) into 2-hydroxy-3-keto-5-methylthiopentenyl-1-phosphate (HK-MTPenyl-1-P). The protein is 2,3-diketo-5-methylthiopentyl-1-phosphate enolase of Bacillus thuringiensis (strain Al Hakam).